A 406-amino-acid polypeptide reads, in one-letter code: Phosphoglycerate kinase (406 aa).

Residues 22 to 24, Arg37, 60 to 63, Arg119, and Arg152 contribute to the substrate site; these read DLN and HLGN. ATP is bound by residues Lys202, Glu325, and 355–358; that span reads GGDT.

It belongs to the phosphoglycerate kinase family. In terms of assembly, monomer.

The protein localises to the cytoplasm. It catalyses the reaction (2R)-3-phosphoglycerate + ATP = (2R)-3-phospho-glyceroyl phosphate + ADP. It functions in the pathway carbohydrate degradation; glycolysis; pyruvate from D-glyceraldehyde 3-phosphate: step 2/5. This is Phosphoglycerate kinase from Orientia tsutsugamushi (strain Ikeda) (Rickettsia tsutsugamushi).